The chain runs to 722 residues: MTSISKKKQPETVDDLDFGRMVGELIDHRKIIIALTSFATLIALLYAFFATPIYKADALIQVEQKQANAILSNLSQMLPDSQPQSAPEIALIQSRMILGKTVDDLNLQAVVSPKYFPIFGRGWARLSGEHQGNIQLSRLYVSSSIGDEENPPEFTLKVKDSNRYVIEFGGEEINGKVGELIEKDGITLKIDEINAKPGAEFTIKYVSKLKAIADLQENLSVADQGKDTGILILSYLGDDPLKIKNIVDSISENYLAQNISRQAAQDEKSLEFLNKQLPMVRSDLDSAEDKLNDFRKRNDSVDLSLEAKSVLDQIVNVDNQLNELTFRESEISQLYTKEHPTYKALMEKRKTLQDERGKLNKRVATMPETQQEILRLSRDVESGRAVYMQLLNRQQELNIAKSSAIGNVRIIDSAVTQHKPVKPKKIIVVLAGLFIGLVISVSLVLVRILLRKGIETPEQLEELGINVYASIPVSESNPKNVIAKRLNKRDDSRPKVLLATENPADLAIEAIRGLRTSLHFAMLEARNNLLMISGASPNAGKTFVSSNLSSVISQTGKKVIFIDADLRKGYTHKLFNIKNTNGLSDYLSGRVALDKIINNLQTEGFDYISRGSVPPNPAELLMHNRLAELLEWANKSYDIVILDTPPILAVADAAIIGNYVGTTLLVARFEENTPKEIDISVKRFQNSGVNIKGCILNGVVKKATNKYGYGYNYYDYSYSDKK.

Transmembrane regions (helical) follow at residues 31–53 (IIIA…ATPI) and 427–449 (IVVL…VRIL).

The protein belongs to the etk/wzc family. In terms of processing, autophosphorylated on tyrosine residue(s).

It localises to the cell inner membrane. It carries out the reaction L-tyrosyl-[protein] + ATP = O-phospho-L-tyrosyl-[protein] + ADP + H(+). Its pathway is glycan metabolism; exopolysaccharide biosynthesis. The chain is Putative tyrosine-protein kinase in cps region from Klebsiella pneumoniae.